A 479-amino-acid polypeptide reads, in one-letter code: Glutamate--tRNA ligase 2 (479 aa).

The 'HIGH' region motif lies at Pro10–Gly20. Residues Lys243–Arg247 carry the 'KMSKS' region motif. Lys246 serves as a coordination point for ATP.

This sequence belongs to the class-I aminoacyl-tRNA synthetase family. Glutamate--tRNA ligase type 1 subfamily. As to quaternary structure, monomer.

The protein resides in the cytoplasm. The enzyme catalyses tRNA(Glu) + L-glutamate + ATP = L-glutamyl-tRNA(Glu) + AMP + diphosphate. In terms of biological role, catalyzes the attachment of glutamate to tRNA(Glu) in a two-step reaction: glutamate is first activated by ATP to form Glu-AMP and then transferred to the acceptor end of tRNA(Glu). The sequence is that of Glutamate--tRNA ligase 2 from Thermoanaerobacter pseudethanolicus (strain ATCC 33223 / 39E) (Clostridium thermohydrosulfuricum).